Consider the following 463-residue polypeptide: L-seryl-tRNA(Sec) selenium transferase (463 aa).

The residue at position 295 (lysine 295) is an N6-(pyridoxal phosphate)lysine.

The protein belongs to the SelA family. As to quaternary structure, homodecamer; pentamer of dimers. Binds only one seryl-tRNA(Sec) per dimer. Pyridoxal 5'-phosphate serves as cofactor.

The protein localises to the cytoplasm. It catalyses the reaction L-seryl-tRNA(Sec) + selenophosphate + H(+) = L-selenocysteinyl-tRNA(Sec) + phosphate. It functions in the pathway aminoacyl-tRNA biosynthesis; selenocysteinyl-tRNA(Sec) biosynthesis; selenocysteinyl-tRNA(Sec) from L-seryl-tRNA(Sec) (bacterial route): step 1/1. Converts seryl-tRNA(Sec) to selenocysteinyl-tRNA(Sec) required for selenoprotein biosynthesis. The sequence is that of L-seryl-tRNA(Sec) selenium transferase from Escherichia fergusonii (strain ATCC 35469 / DSM 13698 / CCUG 18766 / IAM 14443 / JCM 21226 / LMG 7866 / NBRC 102419 / NCTC 12128 / CDC 0568-73).